Here is a 160-residue protein sequence, read N- to C-terminus: 2-amino-4-hydroxy-6-hydroxymethyldihydropteridine pyrophosphokinase (160 aa).

Belongs to the HPPK family. As to quaternary structure, monomer.

The enzyme catalyses 6-hydroxymethyl-7,8-dihydropterin + ATP = (7,8-dihydropterin-6-yl)methyl diphosphate + AMP + H(+). The protein operates within cofactor biosynthesis; tetrahydrofolate biosynthesis; 2-amino-4-hydroxy-6-hydroxymethyl-7,8-dihydropteridine diphosphate from 7,8-dihydroneopterin triphosphate: step 4/4. Its function is as follows. Catalyzes the transfer of pyrophosphate from adenosine triphosphate (ATP) to 6-hydroxymethyl-7,8-dihydropterin, an enzymatic step in folate biosynthesis pathway. In Haemophilus influenzae (strain ATCC 51907 / DSM 11121 / KW20 / Rd), this protein is 2-amino-4-hydroxy-6-hydroxymethyldihydropteridine pyrophosphokinase (folK).